We begin with the raw amino-acid sequence, 273 residues long: Glutamate racemase (273 aa).

Residues Asp11–Ser12 and Tyr43–Gly44 contribute to the substrate site. Cys74 (proton donor/acceptor) is an active-site residue. Residue Asn75 to Thr76 coordinates substrate. Catalysis depends on Cys185, which acts as the Proton donor/acceptor. Thr186–His187 contacts substrate.

This sequence belongs to the aspartate/glutamate racemases family. Homodimer.

It catalyses the reaction L-glutamate = D-glutamate. It participates in cell wall biogenesis; peptidoglycan biosynthesis. Provides the (R)-glutamate required for cell wall biosynthesis. The protein is Glutamate racemase of Enterococcus faecalis (strain ATCC 700802 / V583).